A 218-amino-acid polypeptide reads, in one-letter code: N-(5'-phosphoribosyl)anthranilate isomerase (218 aa).

The protein belongs to the TrpF family.

The enzyme catalyses N-(5-phospho-beta-D-ribosyl)anthranilate = 1-(2-carboxyphenylamino)-1-deoxy-D-ribulose 5-phosphate. It participates in amino-acid biosynthesis; L-tryptophan biosynthesis; L-tryptophan from chorismate: step 3/5. This chain is N-(5'-phosphoribosyl)anthranilate isomerase, found in Rhodopseudomonas palustris (strain HaA2).